A 488-amino-acid chain; its full sequence is GTPase Der (488 aa).

EngA-type G domains are found at residues 3–166 (PVVA…AEAM) and 199–372 (IKLA…DSAT). GTP-binding positions include 9–16 (GRPNVGKS), 56–60 (DTGGI), 118–121 (NKVD), 205–212 (GKPNVGKS), 252–256 (DTAGV), and 317–320 (NKWD). The KH-like domain occupies 373–457 (RRVSTSMLTR…PIQLRFQEGD (85 aa)). The disordered stretch occupies residues 460-488 (FENKTEKLTMSQERRRKRAQSHIKDRKTK). Positions 473–488 (RRRKRAQSHIKDRKTK) are enriched in basic residues.

This sequence belongs to the TRAFAC class TrmE-Era-EngA-EngB-Septin-like GTPase superfamily. EngA (Der) GTPase family. Associates with the 50S ribosomal subunit.

Functionally, GTPase that plays an essential role in the late steps of ribosome biogenesis. The chain is GTPase Der from Shewanella baltica (strain OS223).